A 153-amino-acid chain; its full sequence is Pheromone-binding protein Gp-9 (153 aa).

The signal sequence occupies residues 1 to 19; sequence MKTFVLHIFIFALVAFASA. Disulfide bonds link C37/C77, C73/C129, and C118/C138.

Belongs to the PBP/GOBP family. Homodimer.

The protein resides in the secreted. Functionally, colony queen number, a major feature of social organization, is associated with worker genotype for Gp-9. Colonies are headed by either a single reproductive queen (monogyne form) or multiple queens (polygyne form). Differences in worker Gp-9 genotypes between social forms may cause differences in workers' abilities to recognize queens and regulate their numbers. The polypeptide is Pheromone-binding protein Gp-9 (Solenopsis n. sp. (strain JP-2002) (Fire ant)).